The chain runs to 719 residues: DNA ligase (719 aa).

Residues Asp42 to Asp46, Ser92 to Leu93, and Glu126 each bind NAD(+). The active-site N6-AMP-lysine intermediate is Lys128. NAD(+) is bound by residues Arg149, Glu185, Lys301, and Lys325. Zn(2+)-binding residues include Cys430, Cys433, Cys448, and Cys454. In terms of domain architecture, BRCT spans Ala640–Asp719.

This sequence belongs to the NAD-dependent DNA ligase family. LigA subfamily. Requires Mg(2+) as cofactor. The cofactor is Mn(2+).

It catalyses the reaction NAD(+) + (deoxyribonucleotide)n-3'-hydroxyl + 5'-phospho-(deoxyribonucleotide)m = (deoxyribonucleotide)n+m + AMP + beta-nicotinamide D-nucleotide.. In terms of biological role, DNA ligase that catalyzes the formation of phosphodiester linkages between 5'-phosphoryl and 3'-hydroxyl groups in double-stranded DNA using NAD as a coenzyme and as the energy source for the reaction. It is essential for DNA replication and repair of damaged DNA. This chain is DNA ligase, found in Brucella suis biovar 1 (strain 1330).